The chain runs to 249 residues: Probable transcriptional regulatory protein IL1088 (249 aa).

It belongs to the TACO1 family.

Its subcellular location is the cytoplasm. The sequence is that of Probable transcriptional regulatory protein IL1088 from Idiomarina loihiensis (strain ATCC BAA-735 / DSM 15497 / L2-TR).